Here is a 215-residue protein sequence, read N- to C-terminus: High mobility group protein B1 (215 aa).

1–10 (MGKGDPKKPR) is a binding site for heparin. The tract at residues 1 to 97 (MGKGDPKKPR…KFKDPNAPKR (97 aa)) is sufficient for interaction with HAVCR2. Residues Lys3, Lys7, Lys8, and Lys12 each carry the N6-acetyllysine modification. Residues 3–15 (KGDPKKPRGKMSS) are LPS binding (delipidated). Residues 9–79 (PRGKMSSYAF…RYEREMKTYI (71 aa)) constitute a DNA-binding region (HMG box 1). The residue at position 23 (Cys23) is a Cysteine sulfonic acid (-SO3H); alternate. Cys23 and Cys45 form a disulfide bridge. The Nuclear localization signal (NLS) 1 motif lies at 27–43 (HKKKHPDASVNFSEFSK). N6-acetyllysine occurs at positions 28, 29, and 30. Lys28 participates in a covalent cross-link: Isoglutamyl lysine isopeptide (Lys-Gln) (interchain with Q-?). Ser35 carries the post-translational modification Phosphoserine. Residue Lys43 is modified to N6-acetyllysine. Isoglutamyl lysine isopeptide (Lys-Gln) (interchain with Q-?) cross-links involve residues Lys43 and Lys44. Cys45 bears the Cysteine sulfonic acid (-SO3H); alternate mark. A Phosphothreonine modification is found at Thr51. An Isoglutamyl lysine isopeptide (Lys-Gln) (interchain with Q-?) cross-link involves residue Lys68. The disordered stretch occupies residues 76–95 (KTYIPPKGETKKKFKDPNAP). Positions 80–96 (PPKGETKKKFKDPNAPK) are LPS binding (Lipid A). Residues 83 to 94 (GETKKKFKDPNA) show a composition bias toward basic and acidic residues. A cytokine-stimulating activity region spans residues 89-108 (FKDPNAPKRPPSAFFLFCSE). An N6-acetyllysine modification is found at Lys90. The HMG box 2 DNA-binding region spans 95 to 163 (PKRPPSAFFL…KYEKDIAAYR (69 aa)). Ser100 is modified (phosphoserine). The residue at position 106 (Cys106) is a Cysteine sulfonic acid (-SO3H). 7 positions are modified to N6-acetyllysine: Lys127, Lys128, Lys141, Lys172, Lys173, Lys177, and Lys180. Positions 150–183 (KLKEKYEKDIAAYRAKGKPDAAKKGVVKAEKSKK) are binding to AGER/RAGE. The segment covering 162-179 (YRAKGKPDAAKKGVVKAE) has biased composition (basic and acidic residues). Residues 162–215 (YRAKGKPDAAKKGVVKAEKSKKKKEEEEDEEDEEDEEEEEDEEDEEEEEDDDDE) form a disordered region. The Nuclear localization signal (NLS) 2 signature appears at 178-184 (AEKSKKK). Lys180 is covalently cross-linked (Isoglutamyl lysine isopeptide (Lys-Gln) (interchain with Q-?)). Ser181 carries the post-translational modification ADP-ribosylserine. Residues Lys182, Lys183, Lys184, and Lys185 each carry the N6-acetyllysine modification. Isoglutamyl lysine isopeptide (Lys-Gln) (interchain with Q-?) cross-links involve residues Lys182, Lys183, and Lys184. Positions 187–215 (EEEDEEDEEDEEEEEDEEDEEEEEDDDDE) are enriched in acidic residues.

This sequence belongs to the HMGB family. Interacts (fully reduced HMGB1) with CXCL12; probably in a 1:2 ratio involving two molecules of CXCL12, each interacting with one HMG box of HMGB1; inhibited by glycyrrhizin. Associates with the TLR4:LY96 receptor complex. Component of the RAG complex composed of core components RAG1 and RAG2, and associated component HMGB1 or HMGB2. Interacts (in cytoplasm upon starvation) with BECN1; inhibits the interaction of BECN1 and BCL2 leading to promotion of autophagy. Interacts with KPNA1; involved in nuclear import. Interacts with SREBF1, TLR2, TLR4, TLR9, PTPRZ1, APEX1, FEN1, POLB, TERT. Interacts with IL1B, AGER, MSH2, XPA, XPC, HNF1A, TP53. Interacts with CD24; the probable CD24:SIGLEC10 complex is proposed to inhibit HGMB1-mediated tissue damage immune response. Interacts with THBD; prevents HGMB1 interaction with ACER/RAGE and inhibits HGMB1 pro-inflammatory activity. Interacts with HAVCR2; impairs HMGB1 binding to B-DNA and likely HMGB1-mediated innate immune response. Interacts with XPO1; mediating nuclear export. Interacts with receptor RAGE/AGER. Post-translationally, phosphorylated at serine residues. Phosphorylation in both NLS regions is required for cytoplasmic translocation followed by secretion. Phosphorylation at Thr-51 within the NLS is crucial for secretion induced by porcine reproductive and respiratory syndrome virus (PRRSV). In terms of processing, acetylated on multiple sites upon stimulation with LPS. Acetylation on lysine residues in the nuclear localization signals (NLS 1 and NLS 2) leads to cytoplasmic localization and subsequent secretion. Acetylation on Lys-3 results in preferential binding to DNA ends and impairs DNA bending activity. Reduction/oxidation of cysteine residues Cys-23, Cys-45 and Cys-106 and a possible intramolecular disulfide bond involving Cys-23 and Cys-45 give rise to different redox forms with specific functional activities in various cellular compartments: 1- fully reduced HMGB1 (HMGB1C23hC45hC106h), 2- disulfide HMGB1 (HMGB1C23-C45C106h) and 3- sulfonyl HMGB1 (HMGB1C23soC45soC106so). Post-translationally, poly-ADP-ribosylated by PARP1 when secreted following stimulation with LPS. In terms of processing, in vitro cleavage by CASP1 is liberating a HMG box 1-containing peptide which may mediate immunogenic activity; the peptide antagonizes apoptosis-induced immune tolerance. Can be proteolytically cleaved by a thrombin:thrombomodulin complex; reduces binding to heparin and pro-inflammatory activities. Forms covalent cross-links mediated by transglutaminase TGM2, between a glutamine and the epsilon-amino group of a lysine residue, forming homopolymers and heteropolymers.

The protein localises to the nucleus. Its subcellular location is the chromosome. The protein resides in the cytoplasm. It is found in the secreted. It localises to the cell membrane. The protein localises to the endosome. Its subcellular location is the endoplasmic reticulum-Golgi intermediate compartment. Multifunctional redox sensitive protein with various roles in different cellular compartments. In the nucleus is one of the major chromatin-associated non-histone proteins and acts as a DNA chaperone involved in replication, transcription, chromatin remodeling, V(D)J recombination, DNA repair and genome stability. Proposed to be an universal biosensor for nucleic acids. Promotes host inflammatory response to sterile and infectious signals and is involved in the coordination and integration of innate and adaptive immune responses. In the cytoplasm functions as a sensor and/or chaperone for immunogenic nucleic acids implicating the activation of TLR9-mediated immune responses, and mediates autophagy. Acts as a danger-associated molecular pattern (DAMP) molecule that amplifies immune responses during tissue injury. Released to the extracellular environment can bind DNA, nucleosomes, IL-1 beta, CXCL12, AGER isoform 2/sRAGE, lipopolysaccharide (LPS) and lipoteichoic acid (LTA), and activates cells through engagement of multiple surface receptors. In the extracellular compartment fully reduced HMGB1 (released by necrosis) acts as a chemokine, disulfide HMGB1 (actively secreted) as a cytokine, and sulfonyl HMGB1 (released from apoptotic cells) promotes immunological tolerance. Has proangiogenic activity. May be involved in platelet activation. Binds to phosphatidylserine and phosphatidylethanolamide. Bound to RAGE mediates signaling for neuronal outgrowth. May play a role in accumulation of expanded polyglutamine (polyQ) proteins. Its function is as follows. Nuclear functions are attributed to fully reduced HGMB1. Associates with chromatin and binds DNA with a preference to non-canonical DNA structures such as single-stranded DNA, DNA-containing cruciforms or bent structures, supercoiled DNA and ZDNA. Can bent DNA and enhance DNA flexibility by looping thus providing a mechanism to promote activities on various gene promoters by enhancing transcription factor binding and/or bringing distant regulatory sequences into close proximity. May be involved in nucleotide excision repair (NER), mismatch repair (MMR) and base excision repair (BER) pathways, and double strand break repair such as non-homologous end joining (NHEJ). Involved in V(D)J recombination by acting as a cofactor of the RAG complex: acts by stimulating cleavage and RAG protein binding at the 23 bp spacer of conserved recombination signal sequences (RSS). In vitro can displace histone H1 from highly bent DNA. Can restructure the canonical nucleosome leading to relaxation of structural constraints for transcription factor-binding. Enhances binding of sterol regulatory element-binding proteins (SREBPs) such as SREBF1 to their cognate DNA sequences and increases their transcriptional activities. Facilitates binding of TP53 to DNA. May be involved in mitochondrial quality control and autophagy in a transcription-dependent fashion implicating HSPB1. Can modulate the activity of the telomerase complex and may be involved in telomere maintenance. Represses porcine circovirus type 2 replication within the nucleus by binding to the Ori region of the viral genome. Functionally, in the cytoplasm proposed to dissociate the BECN1:BCL2 complex via competitive interaction with BECN1 leading to autophagy activation. Can protect BECN1 and ATG5 from calpain-mediated cleavage and thus proposed to control their proautophagic and proapoptotic functions and to regulate the extent and severity of inflammation-associated cellular injury. In myeloid cells has a protective role against endotoxemia and bacterial infection by promoting autophagy. Involved in endosomal translocation and activation of TLR9 in response to CpG-DNA in macrophages. In terms of biological role, in the extracellular compartment (following either active secretion or passive release) involved in regulation of the inflammatory response. Fully reduced HGMB1 (which subsequently gets oxidized after release) in association with CXCL12 mediates the recruitment of inflammatory cells during the initial phase of tissue injury; the CXCL12:HMGB1 complex triggers CXCR4 homodimerization. Induces the migration of monocyte-derived immature dendritic cells and seems to regulate adhesive and migratory functions of neutrophils implicating AGER/RAGE and ITGAM. Can bind to various types of DNA and RNA including microbial unmethylated CpG-DNA to enhance the innate immune response to nucleic acids. Proposed to act in promiscuous DNA/RNA sensing which cooperates with subsequent discriminative sensing by specific pattern recognition receptors. Promotes extracellular DNA-induced AIM2 inflammasome activation implicating AGER/RAGE. Disulfide HMGB1 binds to transmembrane receptors, such as AGER/RAGE, TLR2, TLR4 and probably TREM1, thus activating their signal transduction pathways. Mediates the release of cytokines/chemokines such as TNF, IL-1, IL-6, IL-8, CCL2, CCL3, CCL4 and CXCL10. Promotes secretion of interferon-gamma by macrophage-stimulated natural killer (NK) cells in concert with other cytokines like IL-2 or IL-12. TLR4 is proposed to be the primary receptor promoting macrophage activation and signaling through TLR4 seems to implicate LY96/MD-2. In bacterial LPS- or LTA-mediated inflammatory responses binds to the endotoxins and transfers them to CD14 for signaling to the respective TLR4:LY96 and TLR2 complexes. Contributes to tumor proliferation by association with ACER/RAGE. Can bind to IL1-beta and signals through the IL1R1:IL1RAP receptor complex. Binding to class A CpG activates cytokine production in plasmacytoid dendritic cells implicating TLR9, MYD88 and AGER/RAGE and can activate autoreactive B cells. Via HMGB1-containing chromatin immune complexes may also promote B cell responses to endogenous TLR9 ligands through a B-cell receptor (BCR)-dependent and ACER/RAGE-independent mechanism. Inhibits phagocytosis of apoptotic cells by macrophages; the function is dependent on poly-ADP-ribosylation and involves binding to phosphatidylserine on the cell surface of apoptotic cells. In adaptive immunity may be involved in enhancing immunity through activation of effector T cells and suppression of regulatory T (TReg) cells. In contrast, without implicating effector or regulatory T-cells, required for tumor infiltration and activation of T-cells expressing the lymphotoxin LTA:LTB heterotrimer thus promoting tumor malignant progression. Also reported to limit proliferation of T-cells. Released HMGB1:nucleosome complexes formed during apoptosis can signal through TLR2 to induce cytokine production. Involved in induction of immunological tolerance by apoptotic cells; its pro-inflammatory activities when released by apoptotic cells are neutralized by reactive oxygen species (ROS)-dependent oxidation specifically on Cys-106. During macrophage activation by activated lymphocyte-derived self apoptotic DNA (ALD-DNA) promotes recruitment of ALD-DNA to endosomes. The polypeptide is High mobility group protein B1 (HMGB1) (Sus scrofa (Pig)).